Consider the following 298-residue polypeptide: NFU1 iron-sulfur cluster scaffold homolog, mitochondrial (298 aa).

Residues 194-262 are nifU; that stretch reads IKELLDTRIR…IPEVESVEQV (69 aa). The [4Fe-4S] cluster site is built by Cys-231 and Cys-234.

It belongs to the NifU family.

It is found in the mitochondrion. Functionally, molecular scaffold for [Fe-S] cluster assembly of mitochondrial iron-sulfur proteins. This is NFU1 iron-sulfur cluster scaffold homolog, mitochondrial from Drosophila grimshawi (Hawaiian fruit fly).